The chain runs to 157 residues: SsrA-binding protein (157 aa).

A disordered region spans residues 133–157 (HDKRNSIKEREGKREVERALKSRSR).

Belongs to the SmpB family.

The protein localises to the cytoplasm. Functionally, required for rescue of stalled ribosomes mediated by trans-translation. Binds to transfer-messenger RNA (tmRNA), required for stable association of tmRNA with ribosomes. tmRNA and SmpB together mimic tRNA shape, replacing the anticodon stem-loop with SmpB. tmRNA is encoded by the ssrA gene; the 2 termini fold to resemble tRNA(Ala) and it encodes a 'tag peptide', a short internal open reading frame. During trans-translation Ala-aminoacylated tmRNA acts like a tRNA, entering the A-site of stalled ribosomes, displacing the stalled mRNA. The ribosome then switches to translate the ORF on the tmRNA; the nascent peptide is terminated with the 'tag peptide' encoded by the tmRNA and targeted for degradation. The ribosome is freed to recommence translation, which seems to be the essential function of trans-translation. The polypeptide is SsrA-binding protein (Verminephrobacter eiseniae (strain EF01-2)).